We begin with the raw amino-acid sequence, 159 residues long: Disulfide bond formation protein B (159 aa).

The Cytoplasmic segment spans residues 1–8 (MQANSRAF). The chain crosses the membrane as a helical span at residues 9–25 (FLLIAVIAFGLVGYALY). Topologically, residues 26 to 43 (LQHVEGLQPCPLCVLQRF) are periplasmic. An intrachain disulfide couples C35 to C38. A helical transmembrane segment spans residues 44–57 (AFVGIGVFSLLAAL). Residues 58–63 (SSATRL) lie on the Cytoplasmic side of the membrane. Residues 64–81 (LWHGLGMLSGLGGIFVAG) form a helical membrane-spanning segment. Topologically, residues 82 to 136 (YHVSLLLNPKASCGIDPIENWVNALPTAKWLPQVFESDGLCTAPLPPVLGVSIPL) are periplasmic. An intrachain disulfide couples C94 to C122. A helical membrane pass occupies residues 137–155 (WSLIWMVILALTLVVAMIR). Over 156-159 (RERR) the chain is Cytoplasmic.

The protein belongs to the DsbB family.

The protein localises to the cell inner membrane. Its function is as follows. Required for disulfide bond formation in some periplasmic proteins. Acts by oxidizing the DsbA protein. The protein is Disulfide bond formation protein B of Ralstonia nicotianae (strain ATCC BAA-1114 / GMI1000) (Ralstonia solanacearum).